Reading from the N-terminus, the 455-residue chain is MATTAPPNGKWRRLFALFLPIFVSQTGQYAMNFVDVAMSGHASAEDLAGVAIGSSLWVPVFTGAGGILLALSPIVSHHFGAGRHDSITRAVAQALYLAVALAVAIVLIGAAAVPFILKQMSLDENVRHIAFHYLRALSFGIIPLFLYSVLRYFIDALGQTKVTMWITLTALPVNMLFNWLLIYGHGGFPRLGGIGTGYATAITYAYCFAAAAFAALKFRRLAPYRVLVRFYRPSWAAWKELLKTGVPIGSAIFFETSIFAAVTLLVGRFGAETVAAHQSALNFASLLYMIPLSLSMALTIAVGVEAGANRYEAAKQYCLIGITLALAVAAAAALFLSAFRSHVARLYTNDPTVAALTGKFLLYAIFFQVSDAIAAPIQGALRGYKEVNAVFWSALLAYWGVGLPLGCALALLTAAGAFGYWIGLIAGLATGALFLSFRLRAVWRRHDSGRAPCAF.

A run of 12 helical transmembrane segments spans residues 13–31 (RLFA…QYAM), 51–73 (AIGS…ALSP), 94–116 (ALYL…VPFI), 131–150 (FHYL…YSVL), 162–184 (VTMW…LIYG), 194–216 (IGTG…FAAL), 245–267 (GVPI…LLVG), 282–304 (NFAS…AVGV), 317–339 (YCLI…LSAF), 352–369 (TVAA…FFQV), 390–412 (VFWS…LALL), and 417–439 (AFGY…SFRL).

This sequence belongs to the multi antimicrobial extrusion (MATE) (TC 2.A.66.1) family.

Its subcellular location is the cell membrane. Its function is as follows. Multidrug efflux pump. This chain is Probable multidrug resistance protein NorM (norM), found in Geobacillus kaustophilus (strain HTA426).